The chain runs to 74 residues: Chitinases 70, 30, and 20.5 kDa (74 aa).

The segment at 1 to 27 is N-terminus of 70 kDa chitinase; sequence XTSATATYAKTQDWGSCFEGKWTIKNT. Positions 28 to 52 are N-terminus of 30 kDa chitinase; sequence AACSSYPSWVAGRSYAAGDIVYYTD. Residues 53-74 are N-terminus of 20.5 kDa chitinase; the sequence is XGYTDLPVSRQKMCQNGMVTNC.

The protein belongs to the glycosyl hydrolase 18 family. Chitinase class II subfamily. As to quaternary structure, homodimer, but homotrimers and homotetramers could be observed for the 20.5 and 30 kDa chitinases. Post-translationally, the 70 kDa chitinase is probably the precursor protein of the 30 and 20.5 kDa chitinases.

The enzyme catalyses Random endo-hydrolysis of N-acetyl-beta-D-glucosaminide (1-&gt;4)-beta-linkages in chitin and chitodextrins.. In terms of biological role, able to cleave chitin oligomers from N=3 to 6. The protein is Chitinases 70, 30, and 20.5 kDa of Streptomyces olivaceoviridis (Streptomyces corchorusii).